Consider the following 128-residue polypeptide: Large ribosomal subunit protein bL12 (128 aa).

It belongs to the bacterial ribosomal protein bL12 family. Homodimer. Part of the ribosomal stalk of the 50S ribosomal subunit. Forms a multimeric L10(L12)X complex, where L10 forms an elongated spine to which 2 to 4 L12 dimers bind in a sequential fashion. Binds GTP-bound translation factors.

Forms part of the ribosomal stalk which helps the ribosome interact with GTP-bound translation factors. Is thus essential for accurate translation. This is Large ribosomal subunit protein bL12 from Petrotoga mobilis (strain DSM 10674 / SJ95).